The sequence spans 633 residues: Polypeptide N-acetylgalactosaminyltransferase 3 (633 aa).

At 1 to 19 the chain is on the cytoplasmic side; that stretch reads MAHLKRLVKLHIKRHYHKK. The chain crosses the membrane as a helical; Signal-anchor for type II membrane protein span at residues 20-37; the sequence is FWKLGAVIFFFIIVLVLM. Over 38–633 the chain is Lumenal; it reads QREVSVQYSK…LQKWILSQND (596 aa). A glycan (N-linked (GlcNAc...) asparagine) is linked at N132. Residues 184-293 form a catalytic subdomain A region; it reads LPTTSVIIVF…YGWLEPLLAR (110 aa). Positions 277 and 279 each coordinate Mn(2+). N297 carries an N-linked (GlcNAc...) asparagine glycan. The interval 356–418 is catalytic subdomain B; the sequence is PIKTPTFAGG…PCSVVGHVFR (63 aa). Residue H415 participates in Mn(2+) binding. A glycan (N-linked (GlcNAc...) asparagine) is linked at N484. Residues 504-630 form the Ricin B-type lectin domain; that stretch reads VISGYIKSVG…SDPLQKWILS (127 aa). A disulfide bridge connects residues C517 and C535. UDP-N-acetyl-alpha-D-galactosamine contacts are provided by D519, E522, H536, and N541. Cystine bridges form between C561-C574 and C605-C618.

This sequence belongs to the glycosyltransferase 2 family. GalNAc-T subfamily. Mn(2+) is required as a cofactor. In terms of tissue distribution, expressed in organs that contain secretory epithelial glands. Highly expressed in pancreas, skin, kidney and testis. Weakly expressed in prostate, ovary, intestine and colon. Also expressed in placenta and lung and fetal lung and fetal kidney.

The protein resides in the golgi apparatus. It is found in the golgi stack membrane. It carries out the reaction L-seryl-[protein] + UDP-N-acetyl-alpha-D-galactosamine = a 3-O-[N-acetyl-alpha-D-galactosaminyl]-L-seryl-[protein] + UDP + H(+). The catalysed reaction is L-threonyl-[protein] + UDP-N-acetyl-alpha-D-galactosamine = a 3-O-[N-acetyl-alpha-D-galactosaminyl]-L-threonyl-[protein] + UDP + H(+). It functions in the pathway protein modification; protein glycosylation. In terms of biological role, catalyzes the initial reaction in O-linked oligosaccharide biosynthesis, the transfer of an N-acetyl-D-galactosamine residue to a serine or threonine residue on the protein receptor. Has activity toward HIV envelope glycoprotein gp120, EA2, MUC2, MUC1A and MUC5AC. Probably glycosylates fibronectin in vivo. Glycosylates FGF23. This Homo sapiens (Human) protein is Polypeptide N-acetylgalactosaminyltransferase 3 (GALNT3).